The sequence spans 146 residues: Large ribosomal subunit protein uL13 (146 aa).

This sequence belongs to the universal ribosomal protein uL13 family. In terms of assembly, part of the 50S ribosomal subunit.

Its function is as follows. This protein is one of the early assembly proteins of the 50S ribosomal subunit, although it is not seen to bind rRNA by itself. It is important during the early stages of 50S assembly. In Spiroplasma citri, this protein is Large ribosomal subunit protein uL13.